The sequence spans 1010 residues: Peroxisome proliferator-activated receptor gamma coactivator 1-beta (1010 aa).

The abolishes DNA transcriptional activity when missing stretch occupies residues 1-91; that stretch reads MAGNDCGALL…FFQIDSENEA (91 aa). Residues 115–134 form a disordered region; sequence GLDEGDTPSCTPASPAPLSV. The short motif at 140-144 is the LXXLL motif 1 element; the sequence is LERLL. Ser-145 and Ser-148 each carry phosphoserine. The LXXLL motif 2 signature appears at 156 to 160; it reads LQKLL. 3 disordered regions span residues 165 to 214, 227 to 282, and 306 to 329; these read SPTA…RPCT, PRGK…QVPK, and PQRA…PRSR. Composition is skewed to polar residues over residues 178-189 and 264-279; these read TWSQTSLSSRSQ and PQDS…NSAQ. The short motif at 342-346 is the LXXLL motif 3 element; that stretch reads LRELL. The segment covering 369-384 has biased composition (polar residues); that stretch reads TPQSRTRPPKDSQASP. 3 disordered regions span residues 369-475, 517-567, and 590-674; these read TPQS…VCPV, GLTD…CLML, and GTAG…QKRP. Ser-383 carries the phosphoserine modification. Positions 411-428 are enriched in basic and acidic residues; sequence LRLEVKRDVNKPARQKRE. A compositionally biased stretch (acidic residues) spans 429-449; it reads EDEEEEEEEEEEEEKEDEEEE. The span at 521-532 shows a compositional bias: low complexity; sequence SSQGQQLPLGSQ. Residues 604-618 are compositionally biased toward basic and acidic residues; that stretch reads PMEEDPFKQDTKHSP. Composition is skewed to polar residues over residues 619–638 and 659–670; these read GQDT…TATP and QHATTQPVSQAG. Ser-628 carries the post-translational modification Phosphoserine. The HCFC1-binding-motif (HBM) motif lies at 681 to 684; sequence DHDY. Disordered regions lie at residues 714–744 and 778–881; these read HQGA…SMQL and DTVF…KKRR. The span at 782-794 shows a compositional bias: low complexity; it reads EDSSSSSGESSFL. Residues 795–811 are compositionally biased toward acidic residues; it reads LEEEEEEGGEEDDEGED. Over residues 832–852 the composition is skewed to low complexity; the sequence is SRQLCSRSRSSSGSSSCSSWS. Residues 889–963 form the RRM domain; sequence RVVYIRNLSG…RNEPSFHLSY (75 aa).

As to quaternary structure, interacts with estrogen receptor alpha/ESR1. Interacts with Sterol regulatory binding transcription factor 1/SREBF1, PPAR-alpha/PPARA, thyroid hormone receptor beta/THRB and host cell factor/HCFC1. Interacts with Estrogen-related receptor gamma/ESRRG and alpha/ESRRA. Interacts with PRDM16. As to expression, ubiquitous with higher expression in heart, brown adipose tissue.

The protein resides in the nucleus. Functionally, plays a role of stimulator of transcription factors and nuclear receptors activities. Activates transcriptional activity of estrogen receptor alpha, nuclear respiratory factor 1 (NRF1) and glucocorticoid receptor in the presence of glucocorticoids. May play a role in constitutive non-adrenergic-mediated mitochondrial biogenesis as suggested by increased basal oxygen consumption and mitochondrial number when overexpressed. May be part of the pathways regulating the elevation of gluconeogenesis, beta-oxidation of fatty acids and ketogenesis during fasting. Stimulates SREBP-mediated lipogenic gene expression in the liver. Induces energy expenditure and antagonizes obesity when overexpressed. Also induces the expression of mitochondrial genes involved in oxidative metabolism. Induces the expression of PERM1 in the skeletal muscle in an ESRRA-dependent manner. The chain is Peroxisome proliferator-activated receptor gamma coactivator 1-beta (Ppargc1b) from Rattus norvegicus (Rat).